The following is a 199-amino-acid chain: uncharacterized protein (199 aa).

4 consecutive transmembrane segments (helical) span residues 40-60, 86-106, 117-137, and 166-186; these read LLIC…FCFL, VLTG…TFPF, TSWP…LTSS, and FLLA…ALIL.

It is found in the membrane. This is an uncharacterized protein from Saccharomyces cerevisiae (strain ATCC 204508 / S288c) (Baker's yeast).